The sequence spans 155 residues: MNKENKSKLEKLLENVANKQDLEIYSLNIQTNQNPIVIEIIIKKTNGNDVSLDDCALFNTPASDEIEKSNLLNCSYVLEISSQGVSDELTSERDFKTFKGFPVNVELNQKNSKIKFLNGLLYEKSNDYLAINIKGRIKKIPFDEVLKISLCTLKD.

It belongs to the RimP family.

The protein localises to the cytoplasm. Required for maturation of 30S ribosomal subunits. This chain is Ribosome maturation factor RimP, found in Prochlorococcus marinus (strain MIT 9301).